Consider the following 590-residue polypeptide: Muscarinic acetylcholine receptor M3 (590 aa).

Residues 1–67 are Extracellular-facing; that stretch reads MTLHNNNTTS…DPLGGHTIWQ (67 aa). N-linked (GlcNAc...) asparagine glycosylation is found at N6, N7, N15, N41, N48, and N53. The helical transmembrane segment at 68-91 threads the bilayer; sequence VVFIAFLTGVLALVTIIGNILVIV. The Cytoplasmic portion of the chain corresponds to 92-104; sequence AFKVNKQLKTVNN. A helical membrane pass occupies residues 105-125; sequence YFLLSLACADLIIGVISMNLF. Residues 126–142 lie on the Extracellular side of the membrane; the sequence is TTYIIMNRWALGNLACD. C141 and C221 form a disulfide bridge. A helical transmembrane segment spans residues 143–164; the sequence is LWLSIDYVASNASVMNLLVISF. The Cytoplasmic portion of the chain corresponds to 165–184; sequence DRYFSITRPLTYRAKRTTKR. A helical transmembrane segment spans residues 185–207; the sequence is AGVMIGLAWVISFILWAPAILFW. Topologically, residues 208–229 are extracellular; sequence QYFVGKRTVPPGECFIQFLSEP. A helical transmembrane segment spans residues 230–252; that stretch reads TITFGTAIAAFYMPVTIMTILYW. The Cytoplasmic segment spans residues 253–492; sequence RIYKETEKRT…LIKEKKAAQT (240 aa). Positions 275-281 match the Basolateral sorting signal motif; it reads AEAENFV. Residues 324–357 are disordered; that stretch reads AEQMDQDHSSSDSWNNNDAAASLENSASSDEEDI. The segment covering 334–345 has biased composition (low complexity); the sequence is SDSWNNNDAAAS. S385 carries the post-translational modification Phosphoserine. Positions 398–419 are disordered; that stretch reads SVGLERKPSKLQTQQSMDDGGS. Positions 407–419 are enriched in polar residues; it reads KLQTQQSMDDGGS. Residues 493 to 513 traverse the membrane as a helical segment; the sequence is LSAILLAFIITWTPYNIMVLV. Over 514 to 527 the chain is Extracellular; sequence NTFCDSCIPKTYWN. A helical membrane pass occupies residues 528–547; sequence LGYWLCYINSTVNPVCYALC. Residues 548–590 lie on the Cytoplasmic side of the membrane; sequence NKTFRNTFKMLLLCQCDKRKRRKQQYQQRQSVIFHKRVPEQAL.

Belongs to the G-protein coupled receptor 1 family. Muscarinic acetylcholine receptor subfamily. CHRM3 sub-subfamily. As to quaternary structure, homodimer; the dimers can form tetramers. Interacts with NALCN. Interacts with TMEM147.

The protein resides in the cell membrane. It is found in the postsynaptic cell membrane. The protein localises to the basolateral cell membrane. It localises to the endoplasmic reticulum membrane. Functionally, the muscarinic acetylcholine receptor mediates various cellular responses, including inhibition of adenylate cyclase, breakdown of phosphoinositides and modulation of potassium channels through the action of G proteins. Primary transducing effect is Pi turnover. This Bos taurus (Bovine) protein is Muscarinic acetylcholine receptor M3 (CHRM3).